Consider the following 240-residue polypeptide: Pyridoxine 5'-phosphate synthase (240 aa).

Asn7 provides a ligand contact to 3-amino-2-oxopropyl phosphate. 9-10 (DH) lines the 1-deoxy-D-xylulose 5-phosphate pocket. Arg18 serves as a coordination point for 3-amino-2-oxopropyl phosphate. His43 serves as the catalytic Proton acceptor. 2 residues coordinate 1-deoxy-D-xylulose 5-phosphate: Arg45 and His50. Glu70 serves as the catalytic Proton acceptor. Thr100 is a binding site for 1-deoxy-D-xylulose 5-phosphate. The active-site Proton donor is His191. 3-amino-2-oxopropyl phosphate contacts are provided by residues Gly192 and 213-214 (GH).

The protein belongs to the PNP synthase family. As to quaternary structure, homooctamer; tetramer of dimers.

The protein resides in the cytoplasm. It carries out the reaction 3-amino-2-oxopropyl phosphate + 1-deoxy-D-xylulose 5-phosphate = pyridoxine 5'-phosphate + phosphate + 2 H2O + H(+). It functions in the pathway cofactor biosynthesis; pyridoxine 5'-phosphate biosynthesis; pyridoxine 5'-phosphate from D-erythrose 4-phosphate: step 5/5. In terms of biological role, catalyzes the complicated ring closure reaction between the two acyclic compounds 1-deoxy-D-xylulose-5-phosphate (DXP) and 3-amino-2-oxopropyl phosphate (1-amino-acetone-3-phosphate or AAP) to form pyridoxine 5'-phosphate (PNP) and inorganic phosphate. This chain is Pyridoxine 5'-phosphate synthase, found in Gloeothece citriformis (strain PCC 7424) (Cyanothece sp. (strain PCC 7424)).